Reading from the N-terminus, the 571-residue chain is Proline--tRNA ligase (571 aa).

It belongs to the class-II aminoacyl-tRNA synthetase family. ProS type 1 subfamily. In terms of assembly, homodimer.

The protein localises to the cytoplasm. It catalyses the reaction tRNA(Pro) + L-proline + ATP = L-prolyl-tRNA(Pro) + AMP + diphosphate. In terms of biological role, catalyzes the attachment of proline to tRNA(Pro) in a two-step reaction: proline is first activated by ATP to form Pro-AMP and then transferred to the acceptor end of tRNA(Pro). As ProRS can inadvertently accommodate and process non-cognate amino acids such as alanine and cysteine, to avoid such errors it has two additional distinct editing activities against alanine. One activity is designated as 'pretransfer' editing and involves the tRNA(Pro)-independent hydrolysis of activated Ala-AMP. The other activity is designated 'posttransfer' editing and involves deacylation of mischarged Ala-tRNA(Pro). The misacylated Cys-tRNA(Pro) is not edited by ProRS. In Actinobacillus pleuropneumoniae serotype 3 (strain JL03), this protein is Proline--tRNA ligase.